The primary structure comprises 223 residues: ATP-dependent dethiobiotin synthetase BioD (223 aa).

Residue T16 participates in Mg(2+) binding. K37 is an active-site residue. Position 41 (S41) interacts with substrate. The Mg(2+) site is built by D50 and E111. Residues D50, 111–114 (EGAG), and 171–172 (NR) contribute to the ATP site.

Belongs to the dethiobiotin synthetase family. Homodimer. Requires Mg(2+) as cofactor.

Its subcellular location is the cytoplasm. The catalysed reaction is (7R,8S)-7,8-diammoniononanoate + CO2 + ATP = (4R,5S)-dethiobiotin + ADP + phosphate + 3 H(+). It participates in cofactor biosynthesis; biotin biosynthesis; biotin from 7,8-diaminononanoate: step 1/2. In terms of biological role, catalyzes a mechanistically unusual reaction, the ATP-dependent insertion of CO2 between the N7 and N8 nitrogen atoms of 7,8-diaminopelargonic acid (DAPA, also called 7,8-diammoniononanoate) to form a ureido ring. The polypeptide is ATP-dependent dethiobiotin synthetase BioD (Anaeromyxobacter dehalogenans (strain 2CP-1 / ATCC BAA-258)).